A 333-amino-acid polypeptide reads, in one-letter code: Potassium channel protein 1 (333 aa).

Residues 1–6 (METYEK) are Cytoplasmic-facing. Residues 7–27 (IELGIIVIILLILIESVILMT) traverse the membrane as a helical segment. At 28-60 (VEGWDFFTAFYTAVVTISTVGYGDYTPQTFLGK) the chain is on the extracellular side. The Selectivity filter signature appears at 46 to 51 (TVGYGD). The chain crosses the membrane as a helical span at residues 61–81 (LSVIIYIFAGVGAVAYTMGNI). Residues 82 to 333 (ASFFIEGHFR…KLKRYVEGVE (252 aa)) are Cytoplasmic-facing. In terms of domain architecture, RCK N-terminal spans 107-229 (NNHYIICGYG…GADRAVCPYI (123 aa)). The 86-residue stretch at 246 to 331 (EFIHSLVATE…LEKLKRYVEG (86 aa)) folds into the RCK C-terminal domain.

In terms of assembly, homotetramer.

Its subcellular location is the cell membrane. In terms of biological role, potassium channel protein. Seems to conduct potassium at low membrane potentials. This chain is Potassium channel protein 1, found in Methanocaldococcus jannaschii (strain ATCC 43067 / DSM 2661 / JAL-1 / JCM 10045 / NBRC 100440) (Methanococcus jannaschii).